Reading from the N-terminus, the 101-residue chain is Aspartyl/glutamyl-tRNA(Asn/Gln) amidotransferase subunit C (101 aa).

Residues 75–101 (QEALSGAPDAEEQRFRVPRILDEDVAS) are disordered. Basic and acidic residues predominate over residues 85–101 (EEQRFRVPRILDEDVAS).

The protein belongs to the GatC family. Heterotrimer of A, B and C subunits.

The enzyme catalyses L-glutamyl-tRNA(Gln) + L-glutamine + ATP + H2O = L-glutaminyl-tRNA(Gln) + L-glutamate + ADP + phosphate + H(+). The catalysed reaction is L-aspartyl-tRNA(Asn) + L-glutamine + ATP + H2O = L-asparaginyl-tRNA(Asn) + L-glutamate + ADP + phosphate + 2 H(+). Its function is as follows. Allows the formation of correctly charged Asn-tRNA(Asn) or Gln-tRNA(Gln) through the transamidation of misacylated Asp-tRNA(Asn) or Glu-tRNA(Gln) in organisms which lack either or both of asparaginyl-tRNA or glutaminyl-tRNA synthetases. The reaction takes place in the presence of glutamine and ATP through an activated phospho-Asp-tRNA(Asn) or phospho-Glu-tRNA(Gln). In Salinispora arenicola (strain CNS-205), this protein is Aspartyl/glutamyl-tRNA(Asn/Gln) amidotransferase subunit C.